The following is a 121-amino-acid chain: Group 1 truncated hemoglobin (121 aa).

Met1 is modified (N-acetylmethionine). His73 is a binding site for heme.

The protein belongs to the truncated hemoglobin family. Group I subfamily. As to quaternary structure, monomer. Requires heme as cofactor.

This is Group 1 truncated hemoglobin from Tetrahymena thermophila.